Here is a 156-residue protein sequence, read N- to C-terminus: Small ribosomal subunit protein uS7 (156 aa).

The protein belongs to the universal ribosomal protein uS7 family. In terms of assembly, part of the 30S ribosomal subunit. Contacts proteins S9 and S11.

One of the primary rRNA binding proteins, it binds directly to 16S rRNA where it nucleates assembly of the head domain of the 30S subunit. Is located at the subunit interface close to the decoding center, probably blocks exit of the E-site tRNA. This is Small ribosomal subunit protein uS7 from Rhizobium leguminosarum bv. trifolii (strain WSM2304).